The chain runs to 282 residues: Aldo-keto reductase MUL_1987 (282 aa).

The Proton donor role is filled by tyrosine 57. NADPH is bound by residues leucine 197, isoleucine 235, serine 238, threonine 246, asparagine 247, and arginine 273.

Belongs to the aldo/keto reductase family.

The sequence is that of Aldo-keto reductase MUL_1987 from Mycobacterium ulcerans (strain Agy99).